A 234-amino-acid polypeptide reads, in one-letter code: Peptidase E (234 aa).

Catalysis depends on charge relay system residues Ser-123, Asp-138, and His-160.

Belongs to the peptidase S51 family.

Its subcellular location is the cytoplasm. The enzyme catalyses Dipeptidase E catalyzes the hydrolysis of dipeptides Asp-|-Xaa. It does not act on peptides with N-terminal Glu, Asn or Gln, nor does it cleave isoaspartyl peptides.. Its function is as follows. Hydrolyzes dipeptides containing N-terminal aspartate residues. May play a role in allowing the cell to use peptide aspartate to spare carbon otherwise required for the synthesis of the aspartate family of amino acids. The protein is Peptidase E of Actinobacillus pleuropneumoniae serotype 5b (strain L20).